The following is a 118-amino-acid chain: Actin depolymerizing factor ADF (118 aa).

The ADF-H domain occupies 4-118; the sequence is GMGVDENCVA…HEMGDLAPLA (115 aa).

Belongs to the actin-binding proteins ADF family. In terms of assembly, interacts with ACT1 (G-actin); the interaction results in inhibition of actin polymerization. Interacts with DPA; the interaction enhances ADF activity in disassembly of filamentous actin and inhibition of actin polymerization.

It localises to the cytoplasm. Inhibits actin polymerization. Promotes actin depolymerization. Strongly sequesters actin monomers (G-actin). Weakly severs actin filaments (F-actin). This chain is Actin depolymerizing factor ADF, found in Toxoplasma gondii.